The sequence spans 398 residues: Lipase member N (398 aa).

A signal peptide spans 1 to 18 (MMWLLLTTTCLICGTLNA). Residues 79–379 (PVVYMQHALF…DWNHFDFVWG (301 aa)) form the AB hydrolase-1 domain. Catalysis depends on Ser173, which acts as the Nucleophile. Cysteines 247 and 256 form a disulfide. N-linked (GlcNAc...) asparagine glycosylation occurs at Asn272. Residues Asp344 and His373 each act as charge relay system in the active site.

The protein belongs to the AB hydrolase superfamily. Lipase family. Highly expressed in the epidermis in the granular keratinocytes. Also detected in other tissues, although at much lower levels, including lung and spleen.

The protein localises to the secreted. The catalysed reaction is a sterol ester + H2O = a sterol + a fatty acid + H(+). It catalyses the reaction a triacylglycerol + H2O = a 1,2-diacylglycerol + a fatty acid + H(+). The enzyme catalyses a triacylglycerol + H2O = a diacylglycerol + a fatty acid + H(+). It carries out the reaction a cholesterol ester + H2O = cholesterol + a fatty acid + H(+). Plays a highly specific role in the last step of keratinocyte differentiation. Contains two distinct domains: the alpha/beta hydrolase fold and the abhydrolase-associated lipase region, also features the consensus sequence of the active site of a genuine lipase. May have an essential function in lipid metabolism of the most differentiated epidermal layers. The sequence is that of Lipase member N (LIPN) from Homo sapiens (Human).